An 86-amino-acid polypeptide reads, in one-letter code: MALLEFFRPQKKATANIAKERLQIIVAERRNGGPAPSYLPQLKEDILKVISKYVNVSPDMITVSLEQKEEDLSVLELNITLPEDDN.

The protein belongs to the MinE family.

In terms of biological role, prevents the cell division inhibition by proteins MinC and MinD at internal division sites while permitting inhibition at polar sites. This ensures cell division at the proper site by restricting the formation of a division septum at the midpoint of the long axis of the cell. This Aliivibrio salmonicida (strain LFI1238) (Vibrio salmonicida (strain LFI1238)) protein is Cell division topological specificity factor.